Reading from the N-terminus, the 225-residue chain is F-box protein SKIP27 (225 aa).

One can recognise an F-box domain in the interval 121 to 169 (KSRLECLPQDLLIRVICGVDHEDLKSLKLVSKSIREASLVAKTLHFAYT).

Part of a SCF (ASK-cullin-F-box) protein ligase complex. Interacts with SKP1A/ASK1 and SPK1B/ASK2.

It localises to the nucleus. It functions in the pathway protein modification; protein ubiquitination. Its function is as follows. Component of SCF(ASK-cullin-F-box) E3 ubiquitin ligase complexes, which may mediate the ubiquitination and subsequent proteasomal degradation of target proteins. The sequence is that of F-box protein SKIP27 (SKIP27) from Arabidopsis thaliana (Mouse-ear cress).